The sequence spans 951 residues: Bromodomain-containing protein 8 (951 aa).

N6-acetyllysine is present on lysine 85. Residues 97-171 (VRKLTAERVE…ATDAAYQARQ (75 aa)) adopt a coiled-coil conformation. A disordered region spans residues 161 to 273 (KATDAAYQAR…TPPPSPLLSE (113 aa)). A compositionally biased stretch (polar residues) spans 204–226 (TPTTMEEATSGVTPGTLPSTPVT). Serine 456 and serine 460 each carry phosphoserine. The tract at residues 520–547 (EENDDPQSLPGPWEHPIQQERDKPVPLP) is disordered. A Glycyl lysine isopeptide (Lys-Gly) (interchain with G-Cter in SUMO2) cross-link involves residue lysine 542. An N6-acetyllysine; alternate modification is found at lysine 554. A Glycyl lysine isopeptide (Lys-Gly) (interchain with G-Cter in SUMO1); alternate cross-link involves residue lysine 554. A Glycyl lysine isopeptide (Lys-Gly) (interchain with G-Cter in SUMO2); alternate cross-link involves residue lysine 554. Residue lysine 582 forms a Glycyl lysine isopeptide (Lys-Gly) (interchain with G-Cter in SUMO2) linkage. Residues 584–745 (EPTEPEPGMS…PVSESDDGFS (162 aa)) are disordered. The span at 610-622 (PELRSQDSDEEPR) shows a compositional bias: basic and acidic residues. Lysine 648 participates in a covalent cross-link: Glycyl lysine isopeptide (Lys-Gly) (interchain with G-Cter in SUMO2). At serine 652 the chain carries Phosphoserine. A compositionally biased stretch (basic and acidic residues) spans 673–688 (ETQHKFEMSDSLKEES). Lysine 685 is covalently cross-linked (Glycyl lysine isopeptide (Lys-Gly) (interchain with G-Cter in SUMO2)). A phosphoserine mark is found at serine 694, serine 710, and serine 714. The region spanning 779–884 (IQAQKIWKKA…RDVLEQIQQF (106 aa)) is the Bromo domain. Residues 900–922 (AKSLRGRDSTRKQDASEKDSVPM) form a disordered region. Residues 904-919 (RGRDSTRKQDASEKDS) are compositionally biased toward basic and acidic residues.

In terms of assembly, component of the NuA4 histone acetyltransferase complex which contains the catalytic subunit KAT5/TIP60 and the subunits EP400, TRRAP/PAF400, BRD8/SMAP, EPC1, DMAP1/DNMAP1, RUVBL1/TIP49, RUVBL2, ING3, actin, ACTL6A/BAF53A, MORF4L1/MRG15, MORF4L2/MRGX, MRGBP, YEATS4/GAS41, VPS72/YL1 and MEAF6. Component of a NuA4-related complex which contains EP400, TRRAP/PAF400, SRCAP, BRD8/SMAP, EPC1, DMAP1/DNMAP1, RUVBL1/TIP49, RUVBL2, actin, ACTL6A/BAF53A, VPS72 and YEATS4/GAS41. BRD8 isoform 2 interacts with RXRA/NR2B1 and THRB/ERBA2. Component of a SWR1-like complex.

Its subcellular location is the nucleus. In terms of biological role, may act as a coactivator during transcriptional activation by hormone-activated nuclear receptors (NR). Stimulates transcriptional activation by AR/DHTR, ESR1/NR3A1, RXRA/NR2B1 and THRB/ERBA2. Component of the NuA4 histone acetyltransferase (HAT) complex which is involved in transcriptional activation of select genes principally by acetylation of nucleosomal histones H4 and H2A. This modification may both alter nucleosome - DNA interactions and promote interaction of the modified histones with other proteins which positively regulate transcription. This complex may be required for the activation of transcriptional programs associated with oncogene and proto-oncogene mediated growth induction, tumor suppressor mediated growth arrest and replicative senescence, apoptosis, and DNA repair. NuA4 may also play a direct role in DNA repair when recruited to sites of DNA damage. Component of a SWR1-like complex that specifically mediates the removal of histone H2A.Z/H2AZ1 from the nucleosome. The chain is Bromodomain-containing protein 8 (Brd8) from Mus musculus (Mouse).